The chain runs to 342 residues: viral G-protein coupled receptor (342 aa).

The Extracellular segment spans residues 1–51 (MAAEDFLTIFLDDDESWNETLNMSGYDYSGNFSLEVSVCEMTTVVPYTWNV). Residues Asn18, Asn22, and Asn31 are each glycosylated (N-linked (GlcNAc...) asparagine; by host). A helical membrane pass occupies residues 52–72 (GILSLIFLINVLGNGLVTYIF). Over 73 to 92 (CKHRSRAGAIDILLLGICLN) the chain is Cytoplasmic. A helical membrane pass occupies residues 93-113 (SLCLSISLLAEVLMFLFPNII). At 114-121 (STGLCRLE) the chain is on the extracellular side. A helical transmembrane segment spans residues 122-142 (IFFYYLYVYLDIFSVVCVSLV). Topologically, residues 143–159 (RYLLVAYSTRSWPKKQS) are cytoplasmic. The chain crosses the membrane as a helical span at residues 160-180 (LGWVLTSAALLIALVLSGDAC). At 181–217 (RHRSRVVDPVSKQAMCYENAGNMTADWRLHVRTVSVT) the chain is on the extracellular side. Residues 218 to 238 (AGFLLPLALLILFYALTWCVV) form a helical membrane-spanning segment. Over 239–251 (RRTKLQARRKVRG) the chain is Cytoplasmic. A helical transmembrane segment spans residues 252-272 (VIVAVVLLFFVFCFPYHVLNL). Over 273-293 (LDTLLRRRWIRDSCYTRGLIN) the chain is Extracellular. Residues 294–314 (VGLAVTSLLQALYSAVVPLIY) traverse the membrane as a helical segment. Topologically, residues 315 to 342 (SCLGSLFRQRMYGLFQSLRQSFMSGATT) are cytoplasmic.

Belongs to the G-protein coupled receptor 1 family. In terms of assembly, interacts with protein K7; this interaction promotes vGPCR proteasomal degradation. Interacts with host CADM1; this interaction is essential for chronic NF-kappa-B activation.

The protein resides in the host cell membrane. In terms of biological role, receptor that signals constitutively via several signaling pathways including PI3K/AKT as well as mitogen- and stress-activated/MAP kinases. Promotes host cell proliferation and survival, modulates cell migration, stimulates angiogenesis, and recruits inflammatory cells, both in expressing cells and in neighboring cells. Maintains chronic activation of NF-kappa-B via interaction with host CADM1. This is viral G-protein coupled receptor (ORF74) from Human herpesvirus 8 type P (isolate GK18) (HHV-8).